A 360-amino-acid chain; its full sequence is Isopentenyl-diphosphate delta-isomerase (360 aa).

Substrate is bound at residue 12 to 13 (RK). Residues Ser-70, 71–73 (SMT), Ser-101, and Asn-130 each bind FMN. 101–103 (SMR) contacts substrate. Gln-165 contacts substrate. Residue Glu-166 coordinates Mg(2+). Residues Lys-197, 288–290 (GIR), and 309–310 (AG) each bind FMN.

It belongs to the IPP isomerase type 2 family. As to quaternary structure, homooctamer. Dimer of tetramers. FMN serves as cofactor. NADPH is required as a cofactor. It depends on Mg(2+) as a cofactor.

It is found in the cytoplasm. The catalysed reaction is isopentenyl diphosphate = dimethylallyl diphosphate. In terms of biological role, involved in the biosynthesis of isoprenoids. Catalyzes the 1,3-allylic rearrangement of the homoallylic substrate isopentenyl (IPP) to its allylic isomer, dimethylallyl diphosphate (DMAPP). This chain is Isopentenyl-diphosphate delta-isomerase, found in Chlorobium limicola (strain DSM 245 / NBRC 103803 / 6330).